Reading from the N-terminus, the 368-residue chain is GTPase Obg (368 aa).

An Obg domain is found at 1-161; that stretch reads MRFVDEATIT…RSLRLELKIL (161 aa). Residues 162–337 form the OBG-type G domain; that stretch reads ADAGLLGLPN…VVAEMWRMRD (176 aa). GTP is bound by residues 168–175, 193–197, 217–220, 290–293, and 318–320; these read GLPNAGKS, FTTLI, DIPG, NKID, and SAL. Mg(2+) is bound by residues Ser-175 and Thr-195.

It belongs to the TRAFAC class OBG-HflX-like GTPase superfamily. OBG GTPase family. As to quaternary structure, monomer. It depends on Mg(2+) as a cofactor.

The protein resides in the cytoplasm. Its function is as follows. An essential GTPase which binds GTP, GDP and possibly (p)ppGpp with moderate affinity, with high nucleotide exchange rates and a fairly low GTP hydrolysis rate. Plays a role in control of the cell cycle, stress response, ribosome biogenesis and in those bacteria that undergo differentiation, in morphogenesis control. The protein is GTPase Obg of Nitratidesulfovibrio vulgaris (strain DSM 19637 / Miyazaki F) (Desulfovibrio vulgaris).